The following is a 166-amino-acid chain: Large ribosomal subunit protein uL10 (166 aa).

It belongs to the universal ribosomal protein uL10 family. Part of the ribosomal stalk of the 50S ribosomal subunit. The N-terminus interacts with L11 and the large rRNA to form the base of the stalk. The C-terminus forms an elongated spine to which L12 dimers bind in a sequential fashion forming a multimeric L10(L12)X complex.

In terms of biological role, forms part of the ribosomal stalk, playing a central role in the interaction of the ribosome with GTP-bound translation factors. The protein is Large ribosomal subunit protein uL10 of Bacillus velezensis (strain DSM 23117 / BGSC 10A6 / LMG 26770 / FZB42) (Bacillus amyloliquefaciens subsp. plantarum).